A 251-amino-acid chain; its full sequence is GTP cyclohydrolase 1 type 2 homolog (251 aa).

A divalent metal cation contacts are provided by His-62, His-63, Asp-103, His-215, and Glu-219.

The protein belongs to the GTP cyclohydrolase I type 2/NIF3 family. Homohexamer.

This is GTP cyclohydrolase 1 type 2 homolog from Mycoplasmopsis pulmonis (strain UAB CTIP) (Mycoplasma pulmonis).